The chain runs to 1331 residues: MFDRTVNAKFKPASSNAGPGNNPVRRNSMLTPSRGVTIGGTGGNIRKLTKVSSLTSNHHFAVCYPPSNIYQNSNNAGSNSALQRTTSESLRLNMMSRVAAGATPTTVSRASSNSSLATSTSTSLAPKSSSSSGGSNSTPQQQQQQLVSSNNSSSSSNNSFTKASSPNNNGARSVGGAATSAATGTTAAAGSHHHQPHHHHHHHHHHHQHHNHQQQQQQQTSLSQGHASLTVAGGSASAGGGGGGGSGSSSGTAAGGTNRKPKTTSSFEITSVTVGHPKLNAAGDTGDESADDLDESHTDDNSRITDLENETPSMSEDTFSKEEVYYANNALSTNAPVIPTSSQYGLVVVDPIAPSLGQTIQNVQVNVSDNIINVVSGAVTPGGTKKKDDIKETQHRSERFKVVKIESTEPFKRGRWMCMDYLDHSSVGNGGNNNEKTGSSTSEAHAATTDGGAAGVGAGSEAPAHKTTQSMILPPTQKLNENHLEANSTDANWNYAEQQQQQQQQQQQQQTIVGNALTKTLPVALRNVSRSSSVTRSPNATVEFLSPNLLAQQQQQQQQLFDSVNANAASSPNPAGDPNNMDYARTAAMQLHQTLQQLKQREDAMDVPPGAGGYANYQNGGDSAVGAASNNNSAAAATGESQLSTSYVEQQQQQQQPLSPAPLTPQAAPTFAAVAAGQSPNFQLEQQQQQQQATSQIDGIVPQPFNPQQQQQQTPQQSTAQQAAAAANATSAVTAPPPQQTSNTSNAAVTTGQGQTMPLLSHMTSYEQQQPNLGAAAAAAAAGGTAATSVAAPQAIPTLQLQSAPSTIADPQQLMVPQQQQQQQHQEEQQQQPQQQQQPLPPANIASASANNSNLNLTNTNVVATGEATTNALTLTDEQATAALAAAFATGAAAAATGATSAAAATQQQIQQLQQQPNAESETESFITASNPGGNRKRAFSNPHIGGPNDPSFMHRLNPQLYYYNKSQSGRSSFCVDESLWPTNNPNGAVSDTNLYMGSSTDEDYEEAIDQFSPTIYTTRSASRAIPIPNSAGSSPQHQMHHSQPRIAIGINQMEGGGPTRSTGAFSASPSIYAYPHSPFYASSPETSFGSAAMPGHPAASSRISFSYDPAFQRLQVPNASGDRRPRSPLECASVFAAVAAAATCGDAAGGAADTVISSASGTSAVAIDNKIEQAMDLVKSHLMIAVREEVEVLKERISELMDKINKLELENSILKSNIPQETLQQLQLQLQLAAPPATPAIQAAPAVQSVVAPAAAGQAVQQQAAGAVAVTGVATSPASAVVPTSIPNGSAENGSSAVESAAVSVEQQVQQVTSAAAAAASVVTANGPMS.

Disordered regions lie at residues 1–35, 101–317, 429–471, 553–582, 597–665, 681–750, 814–853, and 908–950; these read MFDRTVNAKFKPASSNAGPGNNPVRRNSMLTPSRG, GATP…MSED, NGGN…TQSM, QQQQQQQLFDSVNANAASSPNPAGDPNNMD, QLKQ…PLTP, NFQL…AAVT, LMVPQQQQQQQHQEEQQQQPQQQQQPLPPANIASASANNS, and QQIQ…GPND. Polar residues predominate over residues 13 to 31; that stretch reads ASSNAGPGNNPVRRNSMLT. Composition is skewed to low complexity over residues 106–165 and 175–190; these read TVSR…KASS and GGAATSAATGTTAAAG. The span at 191-212 shows a compositional bias: basic residues; that stretch reads SHHHQPHHHHHHHHHHHQHHNH. The segment covering 236-248 has biased composition (gly residues); it reads ASAGGGGGGGSGS. The segment covering 263–273 has biased composition (polar residues); sequence TTSSFEITSVT. Residues 285–294 are compositionally biased toward acidic residues; that stretch reads TGDESADDLD. The span at 295 to 306 shows a compositional bias: basic and acidic residues; sequence ESHTDDNSRITD. The segment covering 432–443 has biased composition (polar residues); sequence NNNEKTGSSTSE. Low complexity-rich tracts occupy residues 553-580, 614-641, and 701-734; these read QQQQQQQLFDSVNANAASSPNPAGDPNN, YANYQNGGDSAVGAASNNNSAAAATGES, and VPQPFNPQQQQQQTPQQSTAQQAAAAANATSAVT. Polar residues predominate over residues 740 to 750; the sequence is QTSNTSNAAVT. Over residues 917 to 933 the composition is skewed to polar residues; sequence PNAESETESFITASNPG. Residues 1194-1215 are leucine-zipper; that stretch reads LKERISELMDKINKLELENSIL.

The protein belongs to the TSC-22/Dip/Bun family.

Its subcellular location is the cytoplasm. It is found in the nucleus. Functionally, probable transcription factor required for peripheral nervous system morphogenesis, eye development and oogenesis. May be required for the transmission of the dpp signal and for a morphogenetic movement of the medulla in the brain that reorients the second optic lobe relative to the first. Plays a role in determining proper dorsal cell fates leading to the formation of the dorsal appendages. The sequence is that of Protein bunched, class 2/F/G isoform (bun) from Drosophila melanogaster (Fruit fly).